We begin with the raw amino-acid sequence, 240 residues long: Sec-independent protein translocase protein TatC (240 aa).

6 helical membrane-spanning segments follow: residues Ile15–Val35, Leu61–Leu81, Leu103–Leu123, Phe152–Val172, Phe191–Leu211, and Met212–Arg232.

It belongs to the TatC family. In terms of assembly, forms a complex with TatA.

The protein localises to the cell inner membrane. Its function is as follows. Part of the twin-arginine translocation (Tat) system that transports large folded proteins containing a characteristic twin-arginine motif in their signal peptide across membranes. This Aquifex aeolicus (strain VF5) protein is Sec-independent protein translocase protein TatC.